Here is a 498-residue protein sequence, read N- to C-terminus: Ribulose bisphosphate carboxylase large chain (498 aa).

Residues 1–2 constitute a propeptide that is removed on maturation; it reads MS. An N-acetylproline modification is found at Pro3. Lys14 carries the post-translational modification N6,N6,N6-trimethyllysine. Asn123 and Thr173 together coordinate substrate. Lys175 functions as the Proton acceptor in the catalytic mechanism. Lys177 is a binding site for substrate. Positions 201, 203, and 204 each coordinate Mg(2+). The residue at position 201 (Lys201) is an N6-carboxylysine. His294 acts as the Proton acceptor in catalysis. 3 residues coordinate substrate: Arg295, His327, and Ser379. Residues 471–498 form a disordered region; it reads PVDTLDPNDKKQRDNEDTLADKLFGDKG.

Belongs to the RuBisCO large chain family. Type I subfamily. As to quaternary structure, heterohexadecamer of 8 large chains and 8 small chains; disulfide-linked. The disulfide link is formed within the large subunit homodimers. Mg(2+) serves as cofactor. In terms of processing, the disulfide bond which can form in the large chain dimeric partners within the hexadecamer appears to be associated with oxidative stress and protein turnover.

It is found in the plastid. The catalysed reaction is 2 (2R)-3-phosphoglycerate + 2 H(+) = D-ribulose 1,5-bisphosphate + CO2 + H2O. The enzyme catalyses D-ribulose 1,5-bisphosphate + O2 = 2-phosphoglycolate + (2R)-3-phosphoglycerate + 2 H(+). In terms of biological role, ruBisCO catalyzes two reactions: the carboxylation of D-ribulose 1,5-bisphosphate, the primary event in carbon dioxide fixation, as well as the oxidative fragmentation of the pentose substrate in the photorespiration process. Both reactions occur simultaneously and in competition at the same active site. The sequence is that of Ribulose bisphosphate carboxylase large chain (rbcL) from Cuscuta reflexa (Southern Asian dodder).